The chain runs to 93 residues: MSRSVKKGPFVDPKLLKKIIEMNKKNEKKVIKTWSRDSTIVPEMVGHTIAVHDGRKHVPVYITEAMVGHKLGEFAPTRTFRGHAGSEKTTKVK.

Belongs to the universal ribosomal protein uS19 family.

Its function is as follows. Protein S19 forms a complex with S13 that binds strongly to the 16S ribosomal RNA. This chain is Small ribosomal subunit protein uS19, found in Caldanaerobacter subterraneus subsp. tengcongensis (strain DSM 15242 / JCM 11007 / NBRC 100824 / MB4) (Thermoanaerobacter tengcongensis).